The chain runs to 35 residues: Photosystem II reaction center protein M (35 aa).

Residues 7-27 (GFLASLLFVLVPSVFLIVLYI) form a helical membrane-spanning segment.

The protein belongs to the PsbM family. PSII is composed of 1 copy each of membrane proteins PsbA, PsbB, PsbC, PsbD, PsbE, PsbF, PsbH, PsbI, PsbJ, PsbK, PsbL, PsbM, PsbT, PsbX, PsbY, PsbZ, Psb30/Ycf12, peripheral proteins PsbO, CyanoQ (PsbQ), PsbU, PsbV and a large number of cofactors. It forms dimeric complexes.

It is found in the cellular thylakoid membrane. Functionally, one of the components of the core complex of photosystem II (PSII). PSII is a light-driven water:plastoquinone oxidoreductase that uses light energy to abstract electrons from H(2)O, generating O(2) and a proton gradient subsequently used for ATP formation. It consists of a core antenna complex that captures photons, and an electron transfer chain that converts photonic excitation into a charge separation. This subunit is found at the monomer-monomer interface. The polypeptide is Photosystem II reaction center protein M (Synechococcus elongatus (strain ATCC 33912 / PCC 7942 / FACHB-805) (Anacystis nidulans R2)).